A 414-amino-acid polypeptide reads, in one-letter code: Histidine--tRNA ligase (414 aa).

The protein belongs to the class-II aminoacyl-tRNA synthetase family. As to quaternary structure, homodimer.

The protein localises to the cytoplasm. The catalysed reaction is tRNA(His) + L-histidine + ATP = L-histidyl-tRNA(His) + AMP + diphosphate + H(+). The protein is Histidine--tRNA ligase of Anaeromyxobacter dehalogenans (strain 2CP-1 / ATCC BAA-258).